Reading from the N-terminus, the 64-residue chain is MLILTRRVGETIIIDDQIKVTVLAVKGNQVRLGVQAPDEIAIHREEIYHRLMNGVGDDAEMEKK.

Belongs to the CsrA/RsmA family. Homodimer; the beta-strands of each monomer intercalate to form a hydrophobic core, while the alpha-helices form wings that extend away from the core.

Its subcellular location is the cytoplasm. Functionally, a key translational regulator that binds mRNA to regulate translation initiation and/or mRNA stability. Mediates global changes in gene expression, shifting from rapid growth to stress survival by linking envelope stress, the stringent response and the catabolite repression systems. Usually binds in the 5'-UTR; binding at or near the Shine-Dalgarno sequence prevents ribosome-binding, repressing translation, binding elsewhere in the 5'-UTR can activate translation and/or stabilize the mRNA. Its function is antagonized by small RNA(s). This chain is Translational regulator CsrA, found in Dichelobacter nodosus (strain VCS1703A).